The chain runs to 604 residues: Prostaglandin G/H synthase 2 (604 aa).

The N-terminal stretch at 1–17 is a signal peptide; sequence MLFRAVLLCAALGLSQA. Residues 18–55 form the EGF-like domain; that stretch reads ANPCCSNPCQNRGECMSTGFDQYKCDCTRTGFYGENCT. Cystine bridges form between C21–C32, C22–C145, C26–C42, and C44–C54. N53 carries an N-linked (GlcNAc...) asparagine glycan. R106 is a substrate binding site. N-linked (GlcNAc...) asparagine glycosylation is present at N130. The active-site Proton acceptor is H193. Y341 lines the substrate pocket. Y371 serves as the catalytic For cyclooxygenase activity. Heme b is bound at residue H374. N396 carries an N-linked (GlcNAc...) asparagine glycan. C526 is subject to S-nitrosocysteine. C555 and C561 are disulfide-bonded. O-acetylserine; by SPHK1 is present on S565. N-linked (GlcNAc...) asparagine glycosylation occurs at N580.

It belongs to the prostaglandin G/H synthase family. As to quaternary structure, homodimer. Requires heme b as cofactor. In terms of processing, S-nitrosylation by NOS2 (iNOS) activates enzyme activity. S-nitrosylation may take place on different Cys residues in addition to Cys-526. Post-translationally, acetylated at Ser-565 by SPHK1. During neuroinflammation, acetylation by SPHK1 promotes neuronal secretion of specialized preresolving mediators (SPMs), especially 15-R-lipoxin A4, which results in an increase of phagocytic microglia. As to expression, following colon injury, expressed in the wound bed mesenchyme during the first phase of repair, probably by colonic mesenchymal stem cells (at protein level).

It localises to the microsome membrane. Its subcellular location is the endoplasmic reticulum membrane. The protein localises to the nucleus inner membrane. It is found in the nucleus outer membrane. The enzyme catalyses (5Z,8Z,11Z,14Z)-eicosatetraenoate + AH2 + 2 O2 = prostaglandin H2 + A + H2O. It carries out the reaction (5Z,8Z,11Z,14Z)-eicosatetraenoate + 2 O2 = prostaglandin G2. It catalyses the reaction prostaglandin G2 + AH2 = prostaglandin H2 + A + H2O. The catalysed reaction is (5Z,8Z,11Z,14Z,17Z)-eicosapentaenoate + 2 O2 = prostaglandin G3. The enzyme catalyses prostaglandin G3 + AH2 = prostaglandin H3 + A + H2O. It carries out the reaction (8Z,11Z,14Z)-eicosatrienoate + 2 O2 = prostaglandin G1. It catalyses the reaction prostaglandin G1 + AH2 = prostaglandin H1 + A + H2O. The catalysed reaction is 2-(5Z,8Z,11Z,14Z)-eicosatetraenoyl-sn-glycero-3-phosphoethanolamine + 2 O2 = 2-(prostaglandin G2)-sn-glycero-3-phosphoethanolamine. The enzyme catalyses 2-(prostaglandin G2)-sn-glycero-3-phosphoethanolamine + AH2 = 2-(prostaglandin H2)-sn-glycero-3-phosphoethanolamine + A + H2O. It carries out the reaction 2-(5Z,8Z,11Z,14Z)-eicosatetraenoyl-sn-glycero-3-phosphocholine + 2 O2 = 2-(prostaglandin G2)-sn-glycero-3-phosphocholine. It catalyses the reaction 2-(prostaglandin G2)-sn-glycero-3-phosphocholine + AH2 = 2-(prostaglandin H2)-sn-glycero-3-phosphocholine + A + H2O. The catalysed reaction is (15S)-hydroperoxy-(5Z,8Z,11Z,13E)-eicosatetraenoate + AH2 = (15S)-hydroxy-(5Z,8Z,11Z,13E)-eicosatetraenoate + A + H2O. The enzyme catalyses 2-(5Z,8Z,11Z,14Z)-eicosatetraenoyl-sn-glycero-3-phosphocholine + AH2 + O2 = 2-[(15S)-hydroxy-(5Z,8Z,11Z,13E)-eicosatetraenoyl]-sn-glycero-3-phosphocholine + A + H2O. It carries out the reaction 2-(5Z,8Z,11Z,14Z)-eicosatetraenoyl-sn-glycero-3-phosphocholine + AH2 + O2 = 2-[(15R)-hydroxy-(5Z,8Z,11Z,13E)-eicosatetraenoyl]-sn-glycero-3-phosphocholine + A + H2O. It catalyses the reaction 2-(5Z,8Z,11Z,14Z)-eicosatetraenoyl-sn-glycero-3-phosphocholine + AH2 + O2 = 2-[(11R)-hydroxy-(5Z,8Z,12E,14Z)-eicosatetraenoyl]-sn-glycero-3-phosphocholine + A + H2O. The catalysed reaction is (9Z,12Z)-octadecadienoate + AH2 + O2 = 9-hydroxy-(10E,12Z)-octadecadienoate + A + H2O. The enzyme catalyses (9Z,12Z)-octadecadienoate + AH2 + O2 = 13-hydroxy-(9Z,11E)-octadecadienoate + A + H2O. It carries out the reaction (5Z,8Z,11Z,14Z)-eicosatetraenoate + AH2 + O2 = (15R)-hydroxy-(5Z,8Z,11Z,13E)-eicosatetraenoate + A + H2O. It catalyses the reaction (5Z,8Z,11Z,14Z)-eicosatetraenoate + AH2 + O2 = (11R)-hydroxy-(5Z,8Z,12E,14Z)-eicosatetraenoate + A + H2O. The catalysed reaction is (5Z,8Z,11Z,14Z,17Z)-eicosapentaenoate + AH2 + O2 = (11R)-hydroxy-(5Z,8Z,12E,14Z,17Z)-eicosapentaenoate + A + H2O. The enzyme catalyses (5Z,8Z,11Z,14Z,17Z)-eicosapentaenoate + AH2 + O2 = (18S)-hydroxy-(5Z,8Z,11Z,14Z,16E)-eicosapentaenoate + A + H2O. It carries out the reaction (5Z,8Z,11Z,14Z,17Z)-eicosapentaenoate + AH2 + O2 = (18R)-hydroxy-(5Z,8Z,11Z,14Z,16E)-eicosapentaenoate + A + H2O. It catalyses the reaction (5Z,8Z,11Z,14Z,17Z)-eicosapentaenoate + AH2 + O2 = (15R)-hydroxy-(5Z,8Z,11Z,13E,17Z)-eicosapentaenoate + A + H2O. The catalysed reaction is (5Z,8Z,11Z,14Z,17Z)-eicosapentaenoate + AH2 + O2 = (15S)-hydroxy-(5Z,8Z,11Z,13E,17Z)-eicosapentaenoate + A + H2O. The enzyme catalyses (7Z,10Z,13Z,16Z,19Z)-docosapentaenoate + AH2 + O2 = 13R-hydroxy-(7Z,10Z,14E,16Z,19Z)-docosapentaenoate + A + H2O. It carries out the reaction (4Z,7Z,10Z,13Z,16Z,19Z)-docosahexaenoate + AH2 + O2 = 13-hydroxy-(4Z,7Z,10Z,14E,16Z,19Z)-docosahexaenoate + A + H2O. It catalyses the reaction (5S)-hydroxy-(6E,8Z,11Z,14Z)-eicosatetraenoate + AH2 + O2 = (5S,15R)-dihydroxy-(6E,8Z,11Z,13E)-eicosatetraenoate + A + H2O. The catalysed reaction is (4Z,7Z,10Z,13Z,16Z,19Z)-docosahexaenoate + AH2 + O2 = 17R-hydroxy-(4Z,7Z,10Z,13Z,15E,19Z)-docosahexaenoate + A + H2O. The enzyme catalyses (5S)-hydroxy-(6E,8Z,11Z,14Z)-eicosatetraenoate + AH2 + O2 = (5S,15S)-dihydroxy-(6E,8Z,11Z,13E)-eicosatetraenoate + A + H2O. It carries out the reaction (5S)-hydroxy-(6E,8Z,11Z,14Z)-eicosatetraenoate + AH2 + O2 = (5S,11R)-dihydroxy-(6E,8Z,12E,14Z)-eicosatetraenoate + A + H2O. It catalyses the reaction 2-(5Z,8Z,11Z,14Z-eicosatetraenoyl)-glycerol + 2 O2 = 2-glyceryl-prostaglandin G2. The catalysed reaction is 2-glyceryl-prostaglandin G2 + AH2 = 2-glyceryl-prostaglandin H2 + A + H2O. The enzyme catalyses (5Z,8Z,11Z,14Z)-eicosatetraenoate + O2 = (15R)-hydroperoxy-(5Z,8Z,11Z,13E)-eicosatetraenoate. It carries out the reaction (5Z,8Z,11Z,14Z)-eicosatetraenoate + O2 = 11R-hydroperoxy-(5Z,8Z,12E,14Z)-eicosatetraenoate. It catalyses the reaction (9Z,12Z)-octadecadienoate + AH2 + O2 = (9R)-hydroxy-(10E,12Z)-octadecadienoate + A + H2O. The catalysed reaction is (9Z,12Z)-octadecadienoate + AH2 + O2 = (9S)-hydroxy-(10E,12Z)-octadecadienoate + A + H2O. The enzyme catalyses (9Z,12Z)-octadecadienoate + AH2 + O2 = (13S)-hydroxy-(9Z,11E)-octadecadienoate + A + H2O. It carries out the reaction (9Z,12Z)-octadecadienoate + AH2 + O2 = (13R)-hydroxy-(9Z,11E)-octadecadienoate + A + H2O. It participates in lipid metabolism; prostaglandin biosynthesis. Its activity is regulated as follows. Inhibited by the nonsteroidal anti-inflammatory drugs aspirin, naproxen, diclofenac, meclofenamic acid, indomethacin and their analogs. Dual cyclooxygenase and peroxidase in the biosynthesis pathway of prostanoids, a class of C20 oxylipins mainly derived from arachidonate, with a particular role in the inflammatory response. The cyclooxygenase activity oxygenates arachidonate (AA, C20:4(n-6)) to the hydroperoxy endoperoxide prostaglandin G2 (PGG2), and the peroxidase activity reduces PGG2 to the hydroxy endoperoxide PGH2, the precursor of all 2-series prostaglandins and thromboxanes. This complex transformation is initiated by abstraction of hydrogen at carbon 13 (with S-stereochemistry), followed by insertion of molecular O2 to form the endoperoxide bridge between carbon 9 and 11 that defines prostaglandins. The insertion of a second molecule of O2 (bis-oxygenase activity) yields a hydroperoxy group in PGG2 that is then reduced to PGH2 by two electrons. Similarly catalyzes successive cyclooxygenation and peroxidation of dihomo-gamma-linoleate (DGLA, C20:3(n-6)) and eicosapentaenoate (EPA, C20:5(n-3)) to corresponding PGH1 and PGH3, the precursors of 1- and 3-series prostaglandins. In an alternative pathway of prostanoid biosynthesis, converts 2-arachidonoyl lysophopholipids to prostanoid lysophopholipids, which are then hydrolyzed by intracellular phospholipases to release free prostanoids. Metabolizes 2-arachidonoyl glycerol yielding the glyceryl ester of PGH2, a process that can contribute to pain response. Generates lipid mediators from n-3 and n-6 polyunsaturated fatty acids (PUFAs) via a lipoxygenase-type mechanism. Oxygenates PUFAs to hydroperoxy compounds and then reduces them to corresponding alcohols. Plays a role in the generation of resolution phase interaction products (resolvins) during both sterile and infectious inflammation. Metabolizes docosahexaenoate (DHA, C22:6(n-3)) to 17R-HDHA, a precursor of the D-series resolvins (RvDs). As a component of the biosynthetic pathway of E-series resolvins (RvEs), converts eicosapentaenoate (EPA, C20:5(n-3)) primarily to 18S-HEPE that is further metabolized by ALOX5 and LTA4H to generate 18S-RvE1 and 18S-RvE2. In vascular endothelial cells, converts docosapentaenoate (DPA, C22:5(n-3)) to 13R-HDPA, a precursor for 13-series resolvins (RvTs) shown to activate macrophage phagocytosis during bacterial infection. In activated leukocytes, contributes to oxygenation of hydroxyeicosatetraenoates (HETE) to diHETES (5,15-diHETE and 5,11-diHETE). Can also use linoleate (LA, (9Z,12Z)-octadecadienoate, C18:2(n-6)) as substrate and produce hydroxyoctadecadienoates (HODEs) in a regio- and stereospecific manner, being (9R)-HODE ((9R)-hydroxy-(10E,12Z)-octadecadienoate) and (13S)-HODE ((13S)-hydroxy-(9Z,11E)-octadecadienoate) its major products. During neuroinflammation, plays a role in neuronal secretion of specialized preresolving mediators (SPMs) 15R-lipoxin A4 that regulates phagocytic microglia. In Mus musculus (Mouse), this protein is Prostaglandin G/H synthase 2.